Reading from the N-terminus, the 414-residue chain is Cytochrome b (414 aa).

Helical transmembrane passes span 40-60 and 84-104; these read FFGS…VWLA and GWLI…VIYL. Heme b-binding residues include His91 and His105. Helical transmembrane passes span 121 to 141, 154 to 174, 188 to 208, 252 to 272, 294 to 314, 317 to 337, 351 to 371, and 378 to 398; these read LLWM…FFGY, QVIV…SVWV, FFAF…LHIV, LMGV…NPTM, IAPV…PPMY, QFPG…LPWL, IFKW…WLGI, and YTLL…LMPI. Residues His192 and His206 each coordinate heme b.

The protein belongs to the cytochrome b family. In terms of assembly, the main subunits of complex b-c1 are: cytochrome b, cytochrome c1 and the Rieske protein. Heme b serves as cofactor.

It is found in the cell membrane. Component of the ubiquinol-cytochrome c reductase complex (complex III or cytochrome b-c1 complex), which is a respiratory chain that generates an electrochemical potential coupled to ATP synthesis. The polypeptide is Cytochrome b (petB) (Allochromatium vinosum (strain ATCC 17899 / DSM 180 / NBRC 103801 / NCIMB 10441 / D) (Chromatium vinosum)).